A 714-amino-acid chain; its full sequence is MEMASVFTLNVRLDNIAIITIDVPGEKMNTLKAEFASQVRAIIKQLRENKELRGVVFVSAKPDNFIAGADINMIGNCKTAQEAEALARQGQQLMAEIHALPIPVIAAIHGACLGGGLELALACHGRVCTDDPKTVLGLPEVQLGLLPGSGGTQRLPRLIGVSTALEMILTGKQLRAKQALKLGLVDDVVPHSILLEVAVELAKKDRPSSRPLPVRERILAGPLGRALLFKMVGKKTEHKTQGNYPATERILEVVETGLAQGTSSGYDAEARAFGELAMTPQSQALRSIFFASTEVKKDPGSDAPPAPLNSVGILGGGLMGGGIAYVTACKAGLPVRIKDINPQGINHALKYSWDQLEGKVRRRHLKASERDKQLALISGTTDYRGFAHRDLIIEAVFENLELKQQMVAEVEQNCAAHTIFASNTSSLPIGDIAAHATRPEQVIGLHFFSPVEKMPLVEIIPHAGTSAQTIATTVKLAKKQGKTPIVVRDKAGFYVNRILAPYINEAIRMLTEGERVEHIDAALVKFGFPVGPIQLLDEVGIDTGTKIIPVLEAAYGERFSAPANVVSSILNDDRKGRKNGRGFYLYGQKGRKSKKQVDPAIYPLIGAQGQGRLSAPQVAERCVMLMLNEAVRCVDEQVIRSVRDGDIGAVFGIGFPPFLGGPFRYIDSLGAGEVVAIMQRLATQYGSRFTPCERLVEMGARGESFWKTTATDLQ.

The enoyl-CoA hydratase stretch occupies residues 1-190 (MEMASVFTLN…KLGLVDDVVP (190 aa)). A 3-hydroxyacyl-CoA dehydrogenase region spans residues 306 to 714 (APLNSVGILG…FWKTTATDLQ (409 aa)).

It in the N-terminal section; belongs to the enoyl-CoA hydratase/isomerase family. This sequence in the central section; belongs to the 3-hydroxyacyl-CoA dehydrogenase family. In terms of assembly, heterotetramer of two alpha chains (FadJ) and two beta chains (FadI).

The protein localises to the cytoplasm. The catalysed reaction is a (3S)-3-hydroxyacyl-CoA = a (2E)-enoyl-CoA + H2O. The enzyme catalyses a 4-saturated-(3S)-3-hydroxyacyl-CoA = a (3E)-enoyl-CoA + H2O. It catalyses the reaction a (3S)-3-hydroxyacyl-CoA + NAD(+) = a 3-oxoacyl-CoA + NADH + H(+). It carries out the reaction (3S)-3-hydroxybutanoyl-CoA = (3R)-3-hydroxybutanoyl-CoA. The protein operates within lipid metabolism; fatty acid beta-oxidation. Its function is as follows. Catalyzes the formation of a hydroxyacyl-CoA by addition of water on enoyl-CoA. Also exhibits 3-hydroxyacyl-CoA epimerase and 3-hydroxyacyl-CoA dehydrogenase activities. The sequence is that of Fatty acid oxidation complex subunit alpha from Escherichia coli O139:H28 (strain E24377A / ETEC).